The following is an 815-amino-acid chain: Probable inorganic carbon transporter subunit DabA (815 aa).

Zn(2+) is bound by residues cysteine 334, aspartate 336, histidine 507, and cysteine 522.

It belongs to the inorganic carbon transporter (TC 9.A.2) DabA family. In terms of assembly, forms a complex with DabB. The cofactor is Zn(2+).

The protein localises to the cell inner membrane. Its function is as follows. Part of an energy-coupled inorganic carbon pump. The chain is Probable inorganic carbon transporter subunit DabA from Ectopseudomonas mendocina (strain ymp) (Pseudomonas mendocina).